Here is a 150-residue protein sequence, read N- to C-terminus: Ribosome maturation factor RimP (150 aa).

This sequence belongs to the RimP family.

The protein resides in the cytoplasm. Functionally, required for maturation of 30S ribosomal subunits. The polypeptide is Ribosome maturation factor RimP (Francisella tularensis subsp. holarctica (strain LVS)).